The sequence spans 685 residues: DNA-directed RNA polymerase subunit beta' (685 aa).

Zn(2+)-binding residues include cysteine 69, cysteine 71, cysteine 87, and cysteine 90. Mg(2+) contacts are provided by aspartate 492, aspartate 494, and aspartate 496.

Belongs to the RNA polymerase beta' chain family. RpoC1 subfamily. In terms of assembly, in plastids the minimal PEP RNA polymerase catalytic core is composed of four subunits: alpha, beta, beta', and beta''. When a (nuclear-encoded) sigma factor is associated with the core the holoenzyme is formed, which can initiate transcription. The cofactor is Mg(2+). It depends on Zn(2+) as a cofactor.

The protein resides in the plastid. It is found in the chloroplast. The enzyme catalyses RNA(n) + a ribonucleoside 5'-triphosphate = RNA(n+1) + diphosphate. Its function is as follows. DNA-dependent RNA polymerase catalyzes the transcription of DNA into RNA using the four ribonucleoside triphosphates as substrates. In Dioscorea elephantipes (Elephant's foot yam), this protein is DNA-directed RNA polymerase subunit beta'.